Reading from the N-terminus, the 494-residue chain is Glycerol kinase (494 aa).

Position 13 (threonine 13) interacts with ADP. Threonine 13, threonine 14, and serine 15 together coordinate ATP. Threonine 13 is a binding site for sn-glycerol 3-phosphate. Arginine 17 lines the ADP pocket. The sn-glycerol 3-phosphate site is built by arginine 83, glutamate 84, tyrosine 135, and aspartate 244. The glycerol site is built by arginine 83, glutamate 84, tyrosine 135, aspartate 244, and glutamine 245. Threonine 266 and glycine 309 together coordinate ADP. Positions 266, 309, 313, and 410 each coordinate ATP. 2 residues coordinate ADP: glycine 410 and asparagine 414.

Belongs to the FGGY kinase family.

It carries out the reaction glycerol + ATP = sn-glycerol 3-phosphate + ADP + H(+). Its pathway is polyol metabolism; glycerol degradation via glycerol kinase pathway; sn-glycerol 3-phosphate from glycerol: step 1/1. Its activity is regulated as follows. Inhibited by fructose 1,6-bisphosphate (FBP). Its function is as follows. Key enzyme in the regulation of glycerol uptake and metabolism. Catalyzes the phosphorylation of glycerol to yield sn-glycerol 3-phosphate. This Shewanella baltica (strain OS223) protein is Glycerol kinase.